Reading from the N-terminus, the 453-residue chain is Sensor histidine kinase CpxA (453 aa).

Residues 1–4 (MTAR) are Cytoplasmic-facing. Residues 5–25 (IFAIFWLTLALVLMLVLMLPK) traverse the membrane as a helical segment. Residues 26 to 159 (LDSRQMTELL…SDFINLLFDR (134 aa)) lie on the Periplasmic side of the membrane. The helical transmembrane segment at 160–180 (PLLLLIVTMLVSAPLLLWLAW) threads the bilayer. An HAMP domain is found at 180–233 (WSLAKPARKLKNAADEVAQGNLRQHPELEAGPQEFLAAGASFNQMVTALERMMT). The Cytoplasmic segment spans residues 181-453 (SLAKPARKLK…TIWLPLYKRT (273 aa)). One can recognise a Histidine kinase domain in the interval 241 to 451 (DISHELRTPL…RLTIWLPLYK (211 aa)). H244 (nucleophile) is an active-site residue. The residue at position 244 (H244) is a Phosphohistidine; by autocatalysis. ATP contacts are provided by residues 244-247 (HELR), 355-360 (RNALRY), D382, 401-402 (RT), and 412-417 (GTGLGL).

Interacts with cognate response regulator CpxR.

The protein resides in the cell inner membrane. It catalyses the reaction ATP + protein L-histidine = ADP + protein N-phospho-L-histidine.. With respect to regulation, the two-component system is activated by envelope stress such as overexpression of some (misfolded) periplasmic proteins. In terms of biological role, histidine kinase member of the two-component regulatory system CpxA/CpxR which responds to envelope stress response by activating or, in some cases, repressing expression of downstream genes. Activates CpxR by phosphorylation. The protein is Sensor histidine kinase CpxA of Klebsiella pneumoniae subsp. pneumoniae (strain HS11286).